A 224-amino-acid polypeptide reads, in one-letter code: Cytidylate kinase (224 aa).

An ATP-binding site is contributed by 10–18; it reads GPSGVGKGT.

This sequence belongs to the cytidylate kinase family. Type 1 subfamily.

The protein resides in the cytoplasm. It carries out the reaction CMP + ATP = CDP + ADP. It catalyses the reaction dCMP + ATP = dCDP + ADP. The sequence is that of Cytidylate kinase from Haemophilus ducreyi (strain 35000HP / ATCC 700724).